We begin with the raw amino-acid sequence, 619 residues long: Mitochondrial Rho GTPase 1 (619 aa).

At 1–593 (MKKDVRILLV…TQADLKSSTF (593 aa)) the chain is on the cytoplasmic side. One can recognise a Miro 1 domain in the interval 2–168 (KKDVRILLVG…FYYAQKAVLH (167 aa)). Arg-14, Gly-16, Lys-17, Thr-18, and Ser-19 together coordinate GTP. Residue Thr-18 coordinates Mg(2+). Residues Pro-35 and Asp-57 each coordinate Mg(2+). The GTP site is built by Ser-59, Asn-118, Lys-119, Asp-121, Ala-149, and Lys-150. EF-hand domains are found at residues 184–219 (ACIK…CFNT) and 304–339 (HAYL…FPYM). Ca(2+) is bound by residues Asp-197, Asp-199, Asp-201, Thr-203, Glu-208, Asp-317, Asp-319, Asp-321, Ala-323, and Glu-328. Residues 417–580 (RNVFRCNVVG…FVKLTTMAMY (164 aa)) form the Miro 2 domain. GTP-binding residues include Gly-429, Cys-430, Gly-431, Lys-432, Ser-433, Gly-434, Arg-448, Lys-529, Asp-531, Thr-559, and Cys-560. Gly-429 is a binding site for Mg(2+). The helical; Anchor for type IV membrane protein transmembrane segment at 594-616 (WLRASFGATVFAFLGFAMYKALI) threads the bilayer. Residues 617–619 (KQR) are Mitochondrial intermembrane-facing.

It belongs to the mitochondrial Rho GTPase family. In terms of assembly, homodimer.

The protein resides in the mitochondrion outer membrane. It carries out the reaction GTP + H2O = GDP + phosphate + H(+). It catalyses the reaction ATP + H2O = ADP + phosphate + H(+). The catalysed reaction is UTP + H2O = UDP + phosphate + H(+). Functionally, atypical mitochondrial nucleoside-triphosphatase (NTPase) involved in mitochondrial trafficking. Probably involved in control of anterograde transport of mitochondria and their subcellular distribution. Can hydrolyze GTP, ATP and UTP. This is Mitochondrial Rho GTPase 1 (RHOT1) from Gallus gallus (Chicken).